Here is a 245-residue protein sequence, read N- to C-terminus: Cypemycin N-terminal methyltransferase (245 aa).

Belongs to the methyltransferase superfamily.

It catalyses the reaction N-terminal L-alanyl-[cypemycin] + 2 S-adenosyl-L-methionine = N-terminal N,N-dimethyl-L-alanyl-[cypemycin] + 2 S-adenosyl-L-homocysteine + 3 H(+). Its function is as follows. Involved in the biosynthesis of the lanaridin cypemycin. The enzyme can methylate a variety of oligopeptides, cyclic peptides and the epsilon-amino group of lysine. In Streptomyces sp, this protein is Cypemycin N-terminal methyltransferase.